Consider the following 298-residue polypeptide: MLATGATVSTAGLAQVDREKIYQWINELSSPETRENALLELSKKRESVTDLAPMLWHSCGTIAALLQEIVNIYPSINPPTLTAHQSNRVCNALALLQCVASHVETRSAFLAAHIPLFLYPFLHTVSKTRPFEYLRLTSLGVIGALVKTDEQEVINFLLTTEIIPLCLRIMESGSELSKTVATFILQKILLDDTGLAYICQTYERFSHVAMILGKMVLQLSKEPSARLLKHVVRCYLRLSDNSRAREALRQCLPDQLKDTTFAQVLKDDSTTKRWLAQLVKNLQEGQVTDPRGIPLPTQ.

This sequence belongs to the CNOT9 family. Homodimer. Component of the CCR4-NOT complex.

The protein localises to the nucleus. It localises to the cytoplasm. Its subcellular location is the P-body. In terms of biological role, component of the CCR4-NOT complex which is one of the major cellular mRNA deadenylases and is linked to various cellular processes including bulk mRNA degradation, miRNA-mediated repression, translational repression during translational initiation and general transcription regulation. Additional complex functions may be a consequence of its influence on mRNA expression. Involved in down-regulation of MYB- and JUN-dependent transcription. Enhances ligand-dependent transcriptional activity of nuclear hormone receptors. May play a role in cell differentiation. This is CCR4-NOT transcription complex subunit 9 from Danio rerio (Zebrafish).